A 456-amino-acid chain; its full sequence is GTP cyclohydrolase 1 (456 aa).

Zn(2+)-binding residues include C340, H343, and C412.

The protein belongs to the GTP cyclohydrolase I family. In terms of assembly, homodimer. In terms of tissue distribution, expressed in leaves and unripe fruits.

The enzyme catalyses GTP + H2O = 7,8-dihydroneopterin 3'-triphosphate + formate + H(+). The protein operates within cofactor biosynthesis; 7,8-dihydroneopterin triphosphate biosynthesis; 7,8-dihydroneopterin triphosphate from GTP: step 1/1. GTP cyclohydrolase 1 is the first enzyme in the biosynthetic pathway leading to folic acid. In Solanum lycopersicum (Tomato), this protein is GTP cyclohydrolase 1 (GCH1).